A 1195-amino-acid polypeptide reads, in one-letter code: Error-prone DNA polymerase (1195 aa).

Positions 1163-1195 are disordered; the sequence is ALNGDRRDTPDAPAQRHRHPRDVRILPPSRDFH.

It belongs to the DNA polymerase type-C family. DnaE2 subfamily.

The protein resides in the cytoplasm. The catalysed reaction is DNA(n) + a 2'-deoxyribonucleoside 5'-triphosphate = DNA(n+1) + diphosphate. Functionally, DNA polymerase involved in damage-induced mutagenesis and translesion synthesis (TLS). It is not the major replicative DNA polymerase. The sequence is that of Error-prone DNA polymerase from Rhodopseudomonas palustris (strain ATCC BAA-98 / CGA009).